The following is a 157-amino-acid chain: Small ribosomal subunit protein uS7 (157 aa).

This sequence belongs to the universal ribosomal protein uS7 family. In terms of assembly, part of the 30S ribosomal subunit. Contacts proteins S9 and S11.

One of the primary rRNA binding proteins, it binds directly to 16S rRNA where it nucleates assembly of the head domain of the 30S subunit. Is located at the subunit interface close to the decoding center, probably blocks exit of the E-site tRNA. The chain is Small ribosomal subunit protein uS7 from Borrelia garinii subsp. bavariensis (strain ATCC BAA-2496 / DSM 23469 / PBi) (Borreliella bavariensis).